Here is a 772-residue protein sequence, read N- to C-terminus: TBC domain-containing protein C4G8.04 (772 aa).

The segment covering 143–161 (SFFPSSQEPSIPENPSSLT) has biased composition (polar residues). Disordered regions lie at residues 143–163 (SFFPSSQEPSIPENPSSLTGE) and 275–294 (KFFRSSPRCSTPSVSSTFVS). A compositionally biased stretch (low complexity) spans 275-291 (KFFRSSPRCSTPSVSST). Thr395 bears the Phosphothreonine mark. Positions 504 to 693 (GVPLCYKAKV…RIFDMLFCDG (190 aa)) constitute a Rab-GAP TBC domain.

The protein is TBC domain-containing protein C4G8.04 of Schizosaccharomyces pombe (strain 972 / ATCC 24843) (Fission yeast).